The following is a 289-amino-acid chain: 4-diphosphocytidyl-2-C-methyl-D-erythritol kinase (289 aa).

The active site involves K11. 96 to 106 (PVAAGIGGGSS) contributes to the ATP binding site. D138 is an active-site residue.

It belongs to the GHMP kinase family. IspE subfamily.

It catalyses the reaction 4-CDP-2-C-methyl-D-erythritol + ATP = 4-CDP-2-C-methyl-D-erythritol 2-phosphate + ADP + H(+). Its pathway is isoprenoid biosynthesis; isopentenyl diphosphate biosynthesis via DXP pathway; isopentenyl diphosphate from 1-deoxy-D-xylulose 5-phosphate: step 3/6. Its function is as follows. Catalyzes the phosphorylation of the position 2 hydroxy group of 4-diphosphocytidyl-2C-methyl-D-erythritol. The protein is 4-diphosphocytidyl-2-C-methyl-D-erythritol kinase of Azorhizobium caulinodans (strain ATCC 43989 / DSM 5975 / JCM 20966 / LMG 6465 / NBRC 14845 / NCIMB 13405 / ORS 571).